The following is a 204-amino-acid chain: Probable GTP-binding protein EngB (204 aa).

Positions 23–195 (TLPEIAFVGR…ASALMQLLAM (173 aa)) constitute an EngB-type G domain. GTP is bound by residues 31–38 (GRSNVGKS), 58–62 (GRTRE), 76–79 (DLPG), 143–146 (TKID), and 174–176 (FSA). Mg(2+) is bound by residues Ser38 and Thr60.

This sequence belongs to the TRAFAC class TrmE-Era-EngA-EngB-Septin-like GTPase superfamily. EngB GTPase family. Mg(2+) is required as a cofactor.

Functionally, necessary for normal cell division and for the maintenance of normal septation. The polypeptide is Probable GTP-binding protein EngB (Gemmatimonas aurantiaca (strain DSM 14586 / JCM 11422 / NBRC 100505 / T-27)).